The sequence spans 490 residues: MERWWFNSMLFKKEFERRCGLNKSMGSLGPIENTSEDPNLKVKNIHSCSNVDYLFGVKDIWNFISNDTFLVSDRNGDSYSIYFDIENHIFEVDNDHSFLSELESSFYSYRNSSYLNNGFRGEDPYYNSYMSYMYDTQYSWNNHINSCIDNYLQSQICIDTSIISGSESNGDSYIYRAICSGQSLNSSENEGSSRRTRTKDSDLTIRESSNDLEVTQKYKHLWVQCENCYGLNYKKFLKSKMNICEQCGYHLKMSSSDRIELLIDPGTWDPMDEDMVSLDPIEFHSEEEPYKDRIDSYQRKTGLTEAVQTGIGQLNGIPVAIGVMDFQFMGGSMGSVVGEKITRLIEHAANQNLPLMIVCASGGARMQEGSLSLMQMAKISSALYDYQLNKKLFYVSILTSPTTGGVTASFGMLGDIIIAEPNAYIAFAGKRVIEQTLNKTVPEGSQAAEYLFQKGLFDLIVPRNLLKSVLSELFKLHAFFPLNQKSSKIK.

The CoA carboxyltransferase N-terminal domain occupies 221 to 490; it reads LWVQCENCYG…PLNQKSSKIK (270 aa). C225, C228, C244, and C247 together coordinate Zn(2+). Residues 225 to 247 form a C4-type zinc finger; that stretch reads CENCYGLNYKKFLKSKMNICEQC.

It belongs to the AccD/PCCB family. In terms of assembly, acetyl-CoA carboxylase is a heterohexamer composed of biotin carboxyl carrier protein, biotin carboxylase and 2 subunits each of ACCase subunit alpha and ACCase plastid-coded subunit beta (accD). Requires Zn(2+) as cofactor. Expressed in leaves, ripening and mature fruit.

It is found in the plastid. The protein resides in the chloroplast stroma. It localises to the chromoplast stroma. The enzyme catalyses N(6)-carboxybiotinyl-L-lysyl-[protein] + acetyl-CoA = N(6)-biotinyl-L-lysyl-[protein] + malonyl-CoA. Its pathway is lipid metabolism; malonyl-CoA biosynthesis; malonyl-CoA from acetyl-CoA: step 1/1. Component of the acetyl coenzyme A carboxylase (ACC) complex. Biotin carboxylase (BC) catalyzes the carboxylation of biotin on its carrier protein (BCCP) and then the CO(2) group is transferred by the transcarboxylase to acetyl-CoA to form malonyl-CoA. Is up-regulated upon chromoplast differentiation, presumably for fatty acid biosynthesis. The protein is Acetyl-coenzyme A carboxylase carboxyl transferase subunit beta, chloroplastic of Solanum lycopersicum (Tomato).